Consider the following 218-residue polypeptide: Ras-related protein Rab-11B (218 aa).

Glycine 2 is modified (N-acetylglycine). Arginine 4 is modified (citrulline). Residues serine 20, glycine 21, glycine 23, lysine 24, serine 25, asparagine 26, asparagine 37, leucine 38, serine 40, serine 42, and threonine 43 each coordinate GTP. A Mg(2+)-binding site is contributed by serine 25. The short motif at 36–47 (FNLESKSTIGVE) is the Switch 1 element. Threonine 43 and aspartate 66 together coordinate Mg(2+). Positions 67–86 (TAGQERYRAITSAYYRGAVG) match the Switch 2 motif. 6 residues coordinate GTP: glycine 69, asparagine 124, lysine 125, aspartate 127, alanine 155, and leucine 156. The disordered stretch occupies residues 184 to 218 (RAAHDESPGNNVVDISVPPTTDGQRPNKLQCCQSL). Residues cysteine 214 and cysteine 215 are each lipidated (S-geranylgeranyl cysteine). Cysteine 215 is subject to Cysteine methyl ester. Residues 216 to 218 (QSL) constitute a propeptide, removed in mature form.

This sequence belongs to the small GTPase superfamily. Rab family. As to quaternary structure, interacts with KCNMA1. Interacts with RAB11FIP1, RAB11FIP2, RAB11FIP3 and RAB11FIP4. May interact with TBC1D14. Interacts with ATP6V1E1. Interacts with PI4KB. Interacts (GDP-bound form) with ZFYVE27. Interacts (GDP-bound form) with KIF5A in a ZFYVE27-dependent manner. Interacts with RELCH. Interacts (in GTP-bound form) with TBC1D8B (via domain Rab-GAP TBC). Forms a complex containing RAB11B, ASAP1, Rabin8/RAB3IP, RAP11FIP3 and ARF4. Interacts with WDR44. It depends on Mg(2+) as a cofactor. Post-translationally, citrullinated by PADI4. Abundantly expressed in brain, heart and testis. Also detected in kidney and pancreatic islets.

It localises to the recycling endosome membrane. The protein localises to the cytoplasmic vesicle. It is found in the secretory vesicle. Its subcellular location is the synaptic vesicle membrane. The protein resides in the phagosome membrane. The catalysed reaction is GTP + H2O = GDP + phosphate + H(+). Its activity is regulated as follows. Regulated by guanine nucleotide exchange factors (GEFs) which promote the exchange of bound GDP for free GTP. Regulated by GTPase activating proteins (GAPs) which increase the GTP hydrolysis activity. Inhibited by GDP dissociation inhibitors (GDIs) which prevent Rab-GDP dissociation. Its function is as follows. The small GTPases Rab are key regulators of intracellular membrane trafficking, from the formation of transport vesicles to their fusion with membranes. Rabs cycle between an inactive GDP-bound form and an active GTP-bound form that is able to recruit to membranes different set of downstream effectors directly responsible for vesicle formation, movement, tethering and fusion. The small Rab GTPase RAB11B plays a role in endocytic recycling, regulating apical recycling of several transmembrane proteins including cystic fibrosis transmembrane conductance regulator/CFTR, epithelial sodium channel/ENaC, potassium voltage-gated channel, and voltage-dependent L-type calcium channel. May also regulate constitutive and regulated secretion, like insulin granule exocytosis. Required for melanosome transport and release from melanocytes. Also regulates V-ATPase intracellular transport in response to extracellular acidosis. Promotes Rabin8/RAB3IP preciliary vesicular trafficking to mother centriole by forming a ciliary targeting complex containing Rab11, ASAP1, Rabin8/RAB3IP, RAB11FIP3 and ARF4, thereby regulating ciliogenesis initiation. On the contrary, upon LPAR1 receptor signaling pathway activation, interaction with phosphorylated WDR44 prevents Rab11-RAB3IP-RAB11FIP3 complex formation and cilia growth. The polypeptide is Ras-related protein Rab-11B (Mus musculus (Mouse)).